The sequence spans 265 residues: Phosphate import ATP-binding protein PstB 2 (265 aa).

Residues 13–260 (FRTENLNVYY…PTKQATRDYV (248 aa)) enclose the ABC transporter domain. ATP is bound at residue 45-52 (GPSGCGKS).

The protein belongs to the ABC transporter superfamily. Phosphate importer (TC 3.A.1.7) family. As to quaternary structure, the complex is composed of two ATP-binding proteins (PstB), two transmembrane proteins (PstC and PstA) and a solute-binding protein (PstS).

The protein resides in the cell inner membrane. The catalysed reaction is phosphate(out) + ATP + H2O = ADP + 2 phosphate(in) + H(+). Part of the ABC transporter complex PstSACB involved in phosphate import. Responsible for energy coupling to the transport system. This Synechococcus sp. (strain JA-2-3B'a(2-13)) (Cyanobacteria bacterium Yellowstone B-Prime) protein is Phosphate import ATP-binding protein PstB 2.